A 79-amino-acid chain; its full sequence is UPF0654 protein C11D3.01c (79 aa).

Residues 1–79 (MPNPGNVIGG…RAQEELENLE (79 aa)) form a disordered region. Residues 22 to 45 (EETKQREKEYLEEHEGEVGEEHQK) are compositionally biased toward basic and acidic residues.

This sequence belongs to the UPF0654 (con-6) family.

The sequence is that of UPF0654 protein C11D3.01c from Schizosaccharomyces pombe (strain 972 / ATCC 24843) (Fission yeast).